The primary structure comprises 215 residues: 3-isopropylmalate dehydratase small subunit (215 aa).

It belongs to the LeuD family. LeuD type 1 subfamily. As to quaternary structure, heterodimer of LeuC and LeuD.

The enzyme catalyses (2R,3S)-3-isopropylmalate = (2S)-2-isopropylmalate. The protein operates within amino-acid biosynthesis; L-leucine biosynthesis; L-leucine from 3-methyl-2-oxobutanoate: step 2/4. Functionally, catalyzes the isomerization between 2-isopropylmalate and 3-isopropylmalate, via the formation of 2-isopropylmaleate. This Xanthomonas axonopodis pv. citri (strain 306) protein is 3-isopropylmalate dehydratase small subunit.